The following is a 209-amino-acid chain: Protein ASG7 (209 aa).

The Lumenal portion of the chain corresponds to 1–49 (MTTLASSIEHKTKHLAAPFENDENPWMKKYCCQCKSCKMSVPVQPWLPR). Residues 50 to 70 (FFVFGILCPVFWLVNLLAWWF) traverse the membrane as a helical segment. The Cytoplasmic segment spans residues 71–184 (LQYWQPHELE…LLRKTFRDWN (114 aa)). 3 positions are modified to phosphoserine: Ser-121, Ser-123, and Ser-125. Thr-153 carries the phosphothreonine modification. A helical transmembrane segment spans residues 185–205 (LRSLLGLLIDSILIIFVVLLC). At 206 to 209 (KKSR) the chain is on the lumenal side.

The protein localises to the endomembrane system. Required for receptor inhibition of inappropriately expressed a-factor receptor (STE3) in MAT a cells. Inhibits signaling by relocalizing the G protein beta-gamma (STE4-STE18) subunit to intracellular membranes. May also be a mechanism for the down-regulation of the mating pheromone response after the zygotic fusion event, promoting the transition of the new diploid cell to vegetative growth. This is Protein ASG7 (ASG7) from Saccharomyces cerevisiae (strain ATCC 204508 / S288c) (Baker's yeast).